The sequence spans 415 residues: Beta-1,4-glucuronyltransferase 1 (415 aa).

Residues 1-8 (MQMSYAIR) lie on the Cytoplasmic side of the membrane. Residues 9-36 (CAFYQLLLAALMLVAMLQLLYLSLLSGL) traverse the membrane as a helical; Signal-anchor for type II membrane protein segment. Topologically, residues 37–415 (HGQEEQEQYF…ARYPNSPHRC (379 aa)) are lumenal. The N-linked (GlcNAc...) asparagine glycan is linked to Asn-204. The Mn(2+) site is built by Asp-227 and Asp-229. An N-linked (GlcNAc...) asparagine glycan is attached at Asn-300.

It belongs to the glycosyltransferase 49 family. Interacts with LARGE1 and LARGE2. Mn(2+) is required as a cofactor.

It localises to the golgi apparatus membrane. It carries out the reaction 3-O-[beta-D-Xyl-(1-&gt;4)-Rib-ol-P-Rib-ol-P-3-beta-D-GalNAc-(1-&gt;3)-beta-D-GlcNAc-(1-&gt;4)-(O-6-P-alpha-D-Man)]-Thr-[protein] + UDP-alpha-D-glucuronate = 3-O-[beta-D-GlcA-(1-&gt;3)-beta-D-Xyl-(1-&gt;4)-Rib-ol-P-Rib-ol-P-3-beta-D-GalNAc-(1-&gt;3)-beta-D-GlcNAc-(1-&gt;4)-(O-6-P-alpha-D-Man)]-Thr-[protein] + UDP + H(+). Its pathway is protein modification; protein glycosylation. In terms of biological role, beta-1,4-glucuronyltransferase involved in O-mannosylation of alpha-dystroglycan (DAG1). Transfers a glucuronic acid (GlcA) residue onto a xylose (Xyl) acceptor to produce the glucuronyl-beta-1,4-xylose-beta disaccharide primer, which is further elongated by LARGE1, during synthesis of phosphorylated O-mannosyl glycan. Phosphorylated O-mannosyl glycan is a carbohydrate structure present in alpha-dystroglycan (DAG1), which is required for binding laminin G-like domain-containing extracellular proteins with high affinity. Required for axon guidance; via its function in O-mannosylation of alpha-dystroglycan (DAG1). The polypeptide is Beta-1,4-glucuronyltransferase 1 (Mus musculus (Mouse)).